The sequence spans 448 residues: Adenylosuccinate synthetase (448 aa).

Residues 36-42 (GDEGKGK) and 64-66 (GHT) each bind GTP. Asp-37 acts as the Proton acceptor in catalysis. The Mg(2+) site is built by Asp-37 and Gly-64. IMP is bound by residues 37-40 (DEGK), 62-65 (NAGH), Thr-154, Arg-168, Asn-246, Thr-261, and Arg-325. Residue His-65 is the Proton donor of the active site. Position 321–327 (321–327 (VTTKRKR)) interacts with substrate. GTP is bound by residues Arg-327, 353-355 (KLD), and 436-438 (GVG).

Belongs to the adenylosuccinate synthetase family. As to quaternary structure, homodimer. Mg(2+) serves as cofactor.

It is found in the cytoplasm. It catalyses the reaction IMP + L-aspartate + GTP = N(6)-(1,2-dicarboxyethyl)-AMP + GDP + phosphate + 2 H(+). Its pathway is purine metabolism; AMP biosynthesis via de novo pathway; AMP from IMP: step 1/2. Its function is as follows. Plays an important role in the de novo pathway and in the salvage pathway of purine nucleotide biosynthesis. Catalyzes the first committed step in the biosynthesis of AMP from IMP. This is Adenylosuccinate synthetase from Drosophila pseudoobscura pseudoobscura (Fruit fly).